We begin with the raw amino-acid sequence, 158 residues long: Transcription elongation factor GreA (158 aa).

It belongs to the GreA/GreB family.

In terms of biological role, necessary for efficient RNA polymerase transcription elongation past template-encoded arresting sites. The arresting sites in DNA have the property of trapping a certain fraction of elongating RNA polymerases that pass through, resulting in locked ternary complexes. Cleavage of the nascent transcript by cleavage factors such as GreA or GreB allows the resumption of elongation from the new 3'terminus. GreA releases sequences of 2 to 3 nucleotides. The polypeptide is Transcription elongation factor GreA (Verminephrobacter eiseniae (strain EF01-2)).